The sequence spans 391 residues: Lipid-A-disaccharide synthase (391 aa).

Belongs to the LpxB family.

It carries out the reaction a lipid X + a UDP-2-N,3-O-bis[(3R)-3-hydroxyacyl]-alpha-D-glucosamine = a lipid A disaccharide + UDP + H(+). It functions in the pathway bacterial outer membrane biogenesis; LPS lipid A biosynthesis. Functionally, condensation of UDP-2,3-diacylglucosamine and 2,3-diacylglucosamine-1-phosphate to form lipid A disaccharide, a precursor of lipid A, a phosphorylated glycolipid that anchors the lipopolysaccharide to the outer membrane of the cell. The polypeptide is Lipid-A-disaccharide synthase (Rickettsia akari (strain Hartford)).